Here is a 492-residue protein sequence, read N- to C-terminus: Adenylyltransferase and sulfurtransferase uba4 (492 aa).

ATP is bound by residues glycine 99, aspartate 120, 127–131 (SNLHR), lysine 144, and 188–189 (DN). Positions 237 and 240 each coordinate Zn(2+). Catalysis depends on cysteine 254, which acts as the Glycyl thioester intermediate; for adenylyltransferase activity. Residues cysteine 317 and cysteine 320 each contribute to the Zn(2+) site. In terms of domain architecture, Rhodanese spans 378–490 (GSKEPTIIDV…WREQIDPDWP (113 aa)). Catalysis depends on cysteine 445, which acts as the Cysteine persulfide intermediate; for sulfurtransferase activity.

In the N-terminal section; belongs to the HesA/MoeB/ThiF family. UBA4 subfamily. Zn(2+) serves as cofactor.

It localises to the cytoplasm. The protein localises to the cytosol. It catalyses the reaction [molybdopterin-synthase sulfur-carrier protein]-C-terminal Gly-Gly + ATP + H(+) = [molybdopterin-synthase sulfur-carrier protein]-C-terminal Gly-Gly-AMP + diphosphate. It carries out the reaction [molybdopterin-synthase sulfur-carrier protein]-C-terminal Gly-Gly-AMP + S-sulfanyl-L-cysteinyl-[cysteine desulfurase] + AH2 = [molybdopterin-synthase sulfur-carrier protein]-C-terminal-Gly-aminoethanethioate + L-cysteinyl-[cysteine desulfurase] + A + AMP + 2 H(+). It functions in the pathway tRNA modification; 5-methoxycarbonylmethyl-2-thiouridine-tRNA biosynthesis. The protein operates within cofactor biosynthesis; molybdopterin biosynthesis. Its function is as follows. Plays a central role in 2-thiolation of mcm(5)S(2)U at tRNA wobble positions of cytosolic tRNA(Lys), tRNA(Glu) and tRNA(Gln). Also essential during biosynthesis of the molybdenum cofactor. Acts by mediating the C-terminal thiocarboxylation of sulfur carriers urm1 and mocs2a. Its N-terminus first activates urm1 and mocs2a as acyl-adenylates (-COAMP), then the persulfide sulfur on the catalytic cysteine is transferred to urm1 and mocs2a to form thiocarboxylation (-COSH) of their C-terminus. The reaction probably involves hydrogen sulfide that is generated from the persulfide intermediate and that acts as a nucleophile towards urm1 and mocs2a. Subsequently, a transient disulfide bond is formed. Does not use thiosulfate as sulfur donor; nfs1 probably acting as a sulfur donor for thiocarboxylation reactions. The polypeptide is Adenylyltransferase and sulfurtransferase uba4 (Aspergillus clavatus (strain ATCC 1007 / CBS 513.65 / DSM 816 / NCTC 3887 / NRRL 1 / QM 1276 / 107)).